Consider the following 278-residue polypeptide: Urease accessory protein UreD (278 aa).

The protein belongs to the UreD family. In terms of assembly, ureD, UreF and UreG form a complex that acts as a GTP-hydrolysis-dependent molecular chaperone, activating the urease apoprotein by helping to assemble the nickel containing metallocenter of UreC. The UreE protein probably delivers the nickel.

It is found in the cytoplasm. Required for maturation of urease via the functional incorporation of the urease nickel metallocenter. The polypeptide is Urease accessory protein UreD (Blochmanniella pennsylvanica (strain BPEN)).